We begin with the raw amino-acid sequence, 450 residues long: MKVIDQFKNKKVLVLGLAKSGESAARLLDKLGAIVTVNDGKPFEDNPAAQSLLEEGIKVITGGHPLELLDEEFALMVKNPGIPYNNPMIEKALAKGIPVLTEVELAYLISEAPIIGITGSNGKTTTTTMIGEVLTAAGQHGLLSGNIGYPASQVAQIASDKDTLVMELSSFQLMGVQEFHPEIAVITNLMPTHIDYHGSFSEYVAAKWNIQNKMTAADFLVLNFNQDLAKDLTSKTEATVIPFSTLEKVDGAYLEDGQLYFRGEVVMAANEIGVPGSHNVENALATIAVAKLRDVDNQTIKETLSAFGGVKHRLQFVDDIKGVKFYNDSKSTNILATQKALSGFDNSKVVLIAGGLDRGNEFDELVPDITGLKKMVILGQSAERVKRAADKAGVAYVEATDIADATRKAYELAIQGDVVLLSPANASWDMYANFEVRGDLFIDTVAELKE.

Position 119-125 (119-125 (GSNGKTT)) interacts with ATP.

Belongs to the MurCDEF family.

Its subcellular location is the cytoplasm. The enzyme catalyses UDP-N-acetyl-alpha-D-muramoyl-L-alanine + D-glutamate + ATP = UDP-N-acetyl-alpha-D-muramoyl-L-alanyl-D-glutamate + ADP + phosphate + H(+). The protein operates within cell wall biogenesis; peptidoglycan biosynthesis. Cell wall formation. Catalyzes the addition of glutamate to the nucleotide precursor UDP-N-acetylmuramoyl-L-alanine (UMA). The protein is UDP-N-acetylmuramoylalanine--D-glutamate ligase of Streptococcus pneumoniae (strain Hungary19A-6).